Reading from the N-terminus, the 135-residue chain is Ribonuclease P protein component (135 aa).

A disordered region spans residues 115–135 (TNETVSPVSDTPLPQHERGSQ).

It belongs to the RnpA family. In terms of assembly, consists of a catalytic RNA component (M1 or rnpB) and a protein subunit.

It catalyses the reaction Endonucleolytic cleavage of RNA, removing 5'-extranucleotides from tRNA precursor.. In terms of biological role, RNaseP catalyzes the removal of the 5'-leader sequence from pre-tRNA to produce the mature 5'-terminus. It can also cleave other RNA substrates such as 4.5S RNA. The protein component plays an auxiliary but essential role in vivo by binding to the 5'-leader sequence and broadening the substrate specificity of the ribozyme. The sequence is that of Ribonuclease P protein component from Chloroflexus aurantiacus (strain ATCC 29366 / DSM 635 / J-10-fl).